Consider the following 153-residue polypeptide: Aspartate carbamoyltransferase regulatory chain (153 aa).

Residues Cys109, Cys114, Cys138, and Cys141 each contribute to the Zn(2+) site.

Belongs to the PyrI family. As to quaternary structure, contains catalytic and regulatory chains. Requires Zn(2+) as cofactor.

Its function is as follows. Involved in allosteric regulation of aspartate carbamoyltransferase. The polypeptide is Aspartate carbamoyltransferase regulatory chain (Wigglesworthia glossinidia brevipalpis).